The following is a 331-amino-acid chain: Ketol-acid reductoisomerase (NADP(+)) (331 aa).

The KARI N-terminal Rossmann domain maps to 2 to 182 (ARMYYDADAN…GGTRGGILET (181 aa)). Residues 25–28 (YGSQ), serine 51, serine 53, and 83–86 (DDVQ) contribute to the NADP(+) site. Residue histidine 108 is part of the active site. Residue glycine 134 coordinates NADP(+). Residues 183 to 328 (TFREETETDL…KDLRAMFSWL (146 aa)) enclose the KARI C-terminal knotted domain. Positions 191, 195, 227, and 231 each coordinate Mg(2+). Serine 252 contributes to the substrate binding site.

Belongs to the ketol-acid reductoisomerase family. Mg(2+) serves as cofactor.

The catalysed reaction is (2R)-2,3-dihydroxy-3-methylbutanoate + NADP(+) = (2S)-2-acetolactate + NADPH + H(+). It catalyses the reaction (2R,3R)-2,3-dihydroxy-3-methylpentanoate + NADP(+) = (S)-2-ethyl-2-hydroxy-3-oxobutanoate + NADPH + H(+). It functions in the pathway amino-acid biosynthesis; L-isoleucine biosynthesis; L-isoleucine from 2-oxobutanoate: step 2/4. Its pathway is amino-acid biosynthesis; L-valine biosynthesis; L-valine from pyruvate: step 2/4. In terms of biological role, involved in the biosynthesis of branched-chain amino acids (BCAA). Catalyzes an alkyl-migration followed by a ketol-acid reduction of (S)-2-acetolactate (S2AL) to yield (R)-2,3-dihydroxy-isovalerate. In the isomerase reaction, S2AL is rearranged via a Mg-dependent methyl migration to produce 3-hydroxy-3-methyl-2-ketobutyrate (HMKB). In the reductase reaction, this 2-ketoacid undergoes a metal-dependent reduction by NADPH to yield (R)-2,3-dihydroxy-isovalerate. This is Ketol-acid reductoisomerase (NADP(+)) from Picosynechococcus sp. (strain ATCC 27264 / PCC 7002 / PR-6) (Agmenellum quadruplicatum).